We begin with the raw amino-acid sequence, 316 residues long: Bifunctional riboflavin kinase/FMN adenylyltransferase (316 aa).

Belongs to the RibF family.

The enzyme catalyses riboflavin + ATP = FMN + ADP + H(+). It carries out the reaction FMN + ATP + H(+) = FAD + diphosphate. Its pathway is cofactor biosynthesis; FAD biosynthesis; FAD from FMN: step 1/1. It participates in cofactor biosynthesis; FMN biosynthesis; FMN from riboflavin (ATP route): step 1/1. Functionally, catalyzes the phosphorylation of riboflavin to FMN followed by the adenylation of FMN to FAD. This is Bifunctional riboflavin kinase/FMN adenylyltransferase (ribC) from Bacillus subtilis (strain 168).